Here is a 252-residue protein sequence, read N- to C-terminus: C4b-binding protein beta chain (252 aa).

The signal sequence occupies residues 1–17 (MFFWCACCLMVAWRVSA). Sushi domains lie at 21-78 (EHCP…ECRL), 79-136 (GHCP…ICKS), and 137-193 (RDCD…VCKL). 6 disulfides stabilise this stretch: C23-C63, C49-C76, C81-C121, C107-C134, C139-C179, and C165-C191. N-linked (GlcNAc...) asparagine glycans are attached at residues N64, N71, N98, N117, and N154.

In terms of assembly, disulfide-linked complex of alpha and beta chains of 3 possible sorts: a 570 kDa complex of 7 alpha chains and 1 beta chain, a 530 kDa homoheptamer of alpha chains or a 500 kDa complex of 6 alpha chains and 1 beta chain. The central body of the alpha chain homomer supports tentacles, each with the binding site for C4b at the end.

The protein resides in the secreted. Controls the classical pathway of complement activation. It binds as a cofactor to C3b/C4b inactivator (C3bINA), which then hydrolyzes the complement fragment C4b. It also accelerates the degradation of the C4bC2a complex (C3 convertase) by dissociating the complement fragment C2a. It also interacts with anticoagulant protein S and with serum amyloid P component. The beta chain binds protein S. This Homo sapiens (Human) protein is C4b-binding protein beta chain (C4BPB).